A 682-amino-acid chain; its full sequence is Heat shock 70 kDa protein 9, mitochondrial (682 aa).

The transit peptide at 1-46 (MASVALLRSFRRREVQMASVSAFKSVSANGKNSMFGKLGYLARPFC) directs the protein to the mitochondrion. A disordered region spans residues 640-682 (SKIGEHMSKGSGSSGSDGSSGEGTSGTEQTPEAEFEEASGSRK). Positions 651-663 (GSSGSDGSSGEGT) are enriched in gly residues.

This sequence belongs to the heat shock protein 70 (TC 1.A.33) family. DnaK subfamily. In terms of assembly, interacts with HSCB.

The protein localises to the mitochondrion. Its subcellular location is the cytoplasm. The protein resides in the cytosol. In terms of biological role, chaperone involved in the maturation of iron-sulfur [Fe-S] cluster-containing proteins. Has a low intrinsic ATPase activity which is markedly stimulated by HSCB and ISU1. In cooperation with other chaperones, Hsp70s are key components that facilitate folding of de novo synthesized proteins, assist translocation of precursor proteins into organelles, and are responsible for degradation of damaged protein under stress conditions. The protein is Heat shock 70 kDa protein 9, mitochondrial of Arabidopsis thaliana (Mouse-ear cress).